A 272-amino-acid chain; its full sequence is Ethanolamine ammonia-lyase small subunit (272 aa).

Val161, Glu182, and Cys211 together coordinate adenosylcob(III)alamin.

The protein belongs to the EutC family. In terms of assembly, the basic unit is a heterodimer which dimerizes to form tetramers. The heterotetramers trimerize; 6 large subunits form a core ring with 6 small subunits projecting outwards. Adenosylcob(III)alamin serves as cofactor.

The protein resides in the bacterial microcompartment. It catalyses the reaction ethanolamine = acetaldehyde + NH4(+). The protein operates within amine and polyamine degradation; ethanolamine degradation. In terms of biological role, catalyzes the deamination of various vicinal amino-alcohols to oxo compounds. Allows this organism to utilize ethanolamine as the sole source of nitrogen and carbon in the presence of external vitamin B12. In Xanthomonas campestris pv. campestris (strain B100), this protein is Ethanolamine ammonia-lyase small subunit.